The chain runs to 359 residues: C-X-C chemokine receptor type 4 (359 aa).

The tract at residues 1 to 23 (MEPISVSIYTSDNYSEEVGSGDY) is important for chemokine binding and signaling. Over 1–40 (MEPISVSIYTSDNYSEEVGSGDYDSNKEPCFRDENVHFNR) the chain is Extracellular. Tyr9 is subject to Sulfotyrosine. N-linked (GlcNAc...) asparagine glycosylation is present at Asn13. A Sulfotyrosine modification is found at Tyr14. Ser20 carries O-linked (Xyl...) (chondroitin sulfate) serine glycosylation. Residue Tyr23 is modified to Sulfotyrosine. 2 cysteine pairs are disulfide-bonded: Cys30/Cys281 and Cys111/Cys193. The chain crosses the membrane as a helical span at residues 41–65 (IFLPTIYFIIFLTGIVGNGLVILVM). Residues 66–79 (GYQKKLRSMTDKYR) lie on the Cytoplasmic side of the membrane. Residues 80 to 101 (LHLSVADLLFVITLPFWAVDAM) traverse the membrane as a helical segment. Residues 96-99 (WAVD) are chemokine binding. Topologically, residues 102-112 (ADWYFGKFLCK) are extracellular. Residues 113 to 132 (AVHIIYTVNLYSSVLILAFI) form a helical membrane-spanning segment. The interval 115–119 (HIIYT) is chemokine binding. Residues 133–156 (SLDRYLAIVHATNSQRPRKLLAEK) are Cytoplasmic-facing. Residues 135–137 (DRY) carry the Important for signaling motif. The interval 137 to 149 (YLAIVHATNSQRP) is involved in dimerization; when bound to chemokine. A helical transmembrane segment spans residues 157–176 (AVYVGVWIPALLLTIPDFIF). Over 177–202 (ADVSQGDISQGDDRYICDRLYPDSLW) the chain is Extracellular. Positions 193-197 (CDRLY) are chemokine binding, important for signaling. Residues 198-217 (PDSLWMVVFQFQHIMVGLIL) are involved in dimerization. The chain crosses the membrane as a helical span at residues 203–223 (MVVFQFQHIMVGLILPGIVIL). Residues 224–248 (SCYCIIISKLSHSKGHQKRKALKTT) lie on the Cytoplasmic side of the membrane. A helical membrane pass occupies residues 249-268 (VILILAFFACWLPYYVGISI). The Extracellular portion of the chain corresponds to 269–289 (DSFILLGVIKQGCDFESIVHK). The segment at 273–275 (LLG) is involved in dimerization. A helical membrane pass occupies residues 290-309 (WISITEALAFFHCCLNPILY). The Cytoplasmic segment spans residues 310–359 (AFLGAKFKSSAQHALNSMSRGSSLKILSKGKRGGHSSVSTESESSSFHSS). Phosphoserine occurs at positions 326 and 328. Phosphoserine; by PKC and GRK6 occurs at positions 331 and 332. The disordered stretch occupies residues 335–359 (ILSKGKRGGHSSVSTESESSSFHSS). Ser337 carries the post-translational modification Phosphoserine; by GRK6. Lys338 is covalently cross-linked (Glycyl lysine isopeptide (Lys-Gly) (interchain with G-Cter in ubiquitin)). A compositionally biased stretch (low complexity) spans 344–359 (HSSVSTESESSSFHSS). The residue at position 346 (Ser346) is a Phosphoserine; by GRK6. Phosphoserine occurs at positions 355 and 358.

This sequence belongs to the G-protein coupled receptor 1 family. In terms of assembly, monomer. Can form homodimers. Interacts with CD164. Interacts with ARRB2; the interaction is dependent on the C-terminal phosphorylation of CXCR4 and allows activation of MAPK1 and MAPK3. Interacts with ARR3; the interaction is dependent on the C-terminal phosphorylation of CXCR4 and modulates calcium mobilization. Interacts with RNF113A; the interaction, enhanced by CXCL12, promotes CXCR4 ubiquitination and subsequent degradation. Interacts (via the cytoplasmic C-terminal) with ITCH (via the WW domains I and II); the interaction, enhanced by CXCL12, promotes CXCR4 ubiquitination and leads to its degradation. Interacts with extracellular ubiquitin. Interacts with DBN1; this interaction is enhanced by antigenic stimulation. Following LPS binding, may form a complex with GDF5, HSP90AA1 and HSPA8. Phosphorylated on agonist stimulation. Rapidly phosphorylated on serine and threonine residues in the C-terminal. Phosphorylation at Ser-331 and Ser-332 leads to recruitment of ITCH, ubiquitination and protein degradation. Post-translationally, ubiquitinated after ligand binding, leading to its degradation. Ubiquitinated by ITCH at the cell membrane on agonist stimulation. The ubiquitin-dependent mechanism, endosomal sorting complex required for transport (ESCRT), then targets CXCR4 for lysosomal degradation. This process is dependent also on prior Ser-/Thr-phosphorylation in the C-terminal of CXCR4. Also binding of ARRB1 to STAM negatively regulates CXCR4 sorting to lysosomes though modulating ubiquitination of SFR5S. In terms of processing, sulfation is required for efficient binding of CXCL12/SDF-1alpha and promotes its dimerization. O- and N-glycosylated. N-glycosylation can mask coreceptor function. The O-glycosylation chondroitin sulfate attachment does not affect interaction with CXCL12/SDF-1alpha nor its coreceptor activity. As to expression, lymphocytes, macrophages, neutrophils, microglial cells and astrocytes. Found in spleen, thymus, bone marrow, lymph nodes and, at lower levels in brain, small intestine, stomach and kidney. CXCR4-A is predominant in all tissues tested. During embryonic development, high levels are detected in the endothelium of developing blood vessels and in many regions of the developing brain including the olfactory epithelium, olfactory bulb, hippocampus, cerebellum and spinal cord.

It is found in the cell membrane. The protein resides in the cell junction. Its subcellular location is the early endosome. It localises to the late endosome. The protein localises to the lysosome. In terms of biological role, receptor for the C-X-C chemokine CXCL12/SDF-1 that transduces a signal by increasing intracellular calcium ion levels and enhancing MAPK1/MAPK3 activation. Involved in the AKT signaling cascade. Plays a role in regulation of cell migration, e.g. during wound healing. Acts as a receptor for extracellular ubiquitin; leading to enhanced intracellular calcium ions and reduced cellular cAMP levels. Binds bacterial lipopolysaccharide (LPS) et mediates LPS-induced inflammatory response, including TNF secretion by monocytes. Involved in hematopoiesis and in cardiac ventricular septum formation. Also plays an essential role in vascularization of the gastrointestinal tract, probably by regulating vascular branching and/or remodeling processes in endothelial cells. Involved in cerebellar development. In the CNS, could mediate hippocampal-neuron survival. This Mus musculus (Mouse) protein is C-X-C chemokine receptor type 4 (Cxcr4).